The chain runs to 186 residues: Adenine phosphoribosyltransferase (186 aa).

Position 132–136 (132–136 (ATGGS)) interacts with AMP.

Belongs to the purine/pyrimidine phosphoribosyltransferase family. As to quaternary structure, homodimer. Mg(2+) serves as cofactor.

It is found in the cytoplasm. The protein resides in the nucleus. It carries out the reaction AMP + diphosphate = 5-phospho-alpha-D-ribose 1-diphosphate + adenine. Its pathway is purine metabolism; AMP biosynthesis via salvage pathway; AMP from adenine: step 1/1. Its function is as follows. Catalyzes a salvage reaction resulting in the formation of AMP, that is energically less costly than de novo synthesis. The polypeptide is Adenine phosphoribosyltransferase (APT1) (Debaryomyces hansenii (strain ATCC 36239 / CBS 767 / BCRC 21394 / JCM 1990 / NBRC 0083 / IGC 2968) (Yeast)).